The following is a 930-amino-acid chain: Translation initiation factor IF-2 (930 aa).

The segment covering 50–67 (FKPAAAPKVEAKPAAPKV) has biased composition (low complexity). Disordered stretches follow at residues 50-195 (FKPA…PRID) and 260-346 (EVVP…HELP). 2 stretches are compositionally biased toward basic and acidic residues: residues 68 to 90 (SAEK…EAKP) and 110 to 125 (FKAE…AERR). Low complexity predominate over residues 129–141 (KGNNRDQQQNGNR). 2 stretches are compositionally biased toward basic and acidic residues: residues 157-167 (RDNRRFNDQAK) and 262-295 (VPEK…DGPR). Positions 309 to 318 (NQKNSNWNNN) are enriched in low complexity. Positions 337–346 (VTERKFHELP) are enriched in basic and acidic residues. The tr-type G domain occupies 432–599 (ERPPVVTIMG…TVLLVAEIQE (168 aa)). A G1 region spans residues 441 to 448 (GHVDHGKT). 441 to 448 (GHVDHGKT) is a GTP binding site. Residues 466 to 470 (GITQH) form a G2 region. Residues 487-490 (DTPG) are G3. GTP contacts are provided by residues 487–491 (DTPGH) and 541–544 (NKID). Residues 541–544 (NKID) form a G4 region. The tract at residues 577-579 (SAK) is G5.

The protein belongs to the TRAFAC class translation factor GTPase superfamily. Classic translation factor GTPase family. IF-2 subfamily.

The protein resides in the cytoplasm. In terms of biological role, one of the essential components for the initiation of protein synthesis. Protects formylmethionyl-tRNA from spontaneous hydrolysis and promotes its binding to the 30S ribosomal subunits. Also involved in the hydrolysis of GTP during the formation of the 70S ribosomal complex. The sequence is that of Translation initiation factor IF-2 from Streptococcus pneumoniae (strain Hungary19A-6).